We begin with the raw amino-acid sequence, 313 residues long: Porphobilinogen deaminase (313 aa).

S-(dipyrrolylmethanemethyl)cysteine is present on Cys242.

The protein belongs to the HMBS family. As to quaternary structure, monomer. Dipyrromethane is required as a cofactor.

The enzyme catalyses 4 porphobilinogen + H2O = hydroxymethylbilane + 4 NH4(+). It functions in the pathway porphyrin-containing compound metabolism; protoporphyrin-IX biosynthesis; coproporphyrinogen-III from 5-aminolevulinate: step 2/4. Its function is as follows. Tetrapolymerization of the monopyrrole PBG into the hydroxymethylbilane pre-uroporphyrinogen in several discrete steps. This Pseudomonas syringae pv. syringae (strain B728a) protein is Porphobilinogen deaminase.